The primary structure comprises 477 residues: 3-isopropylmalate dehydratase large subunit (477 aa).

Residues Cys-351, Cys-411, and Cys-414 each coordinate [4Fe-4S] cluster.

This sequence belongs to the aconitase/IPM isomerase family. LeuC type 1 subfamily. As to quaternary structure, heterodimer of LeuC and LeuD. [4Fe-4S] cluster serves as cofactor.

The catalysed reaction is (2R,3S)-3-isopropylmalate = (2S)-2-isopropylmalate. The protein operates within amino-acid biosynthesis; L-leucine biosynthesis; L-leucine from 3-methyl-2-oxobutanoate: step 2/4. Its function is as follows. Catalyzes the isomerization between 2-isopropylmalate and 3-isopropylmalate, via the formation of 2-isopropylmaleate. The protein is 3-isopropylmalate dehydratase large subunit of Kineococcus radiotolerans (strain ATCC BAA-149 / DSM 14245 / SRS30216).